We begin with the raw amino-acid sequence, 913 residues long: DNA mismatch repair protein MutS (913 aa).

720–727 (GPNASGKS) serves as a coordination point for ATP.

It belongs to the DNA mismatch repair MutS family.

This protein is involved in the repair of mismatches in DNA. It is possible that it carries out the mismatch recognition step. This protein has a weak ATPase activity. This chain is DNA mismatch repair protein MutS, found in Prochlorococcus marinus (strain MIT 9312).